The primary structure comprises 861 residues: Leucine--tRNA ligase (861 aa).

Positions 42–52 (PYPSGRLHMGH) match the 'HIGH' region motif. A 'KMSKS' region motif is present at residues 619–623 (KMSKS). Position 622 (lysine 622) interacts with ATP.

Belongs to the class-I aminoacyl-tRNA synthetase family.

Its subcellular location is the cytoplasm. The enzyme catalyses tRNA(Leu) + L-leucine + ATP = L-leucyl-tRNA(Leu) + AMP + diphosphate. In Haemophilus influenzae (strain ATCC 51907 / DSM 11121 / KW20 / Rd), this protein is Leucine--tRNA ligase.